The chain runs to 559 residues: Glucosylglycerate phosphorylase (559 aa).

The active-site Nucleophile is Asp-229.

This sequence belongs to the glycosyl hydrolase 13 family. Glucosylglycerate phosphorylase subfamily.

It carries out the reaction (2R)-2-O-(alpha-D-glucopyranosyl)-glycerate + phosphate = (R)-glycerate + alpha-D-glucose 1-phosphate. Its function is as follows. Catalyzes the reversible phosphorolysis of glucosylglycerate into alpha-D-glucose 1-phosphate (Glc1P) and D-glycerate (also called (R)-glycerate). May be a regulator of intracellular levels of glucosylglycerate, a compatible solute that primarily protects organisms facing salt stress and very specific nutritional constraints. Cannot catalyze the phosphorolysis of sucrose. Does not act on other sugars such as alpha-D-galactose 1-phosphate, alpha-D-mannose 1-phosphate or beta-D-glucose 1-phosphate; in vitro D-erythronate can substitute for D-glycerate with a much lower efficiency. The protein is Glucosylglycerate phosphorylase (ycjM) of Escherichia coli (strain K12).